A 686-amino-acid chain; its full sequence is Probable metal-nicotianamine transporter YSL4 (686 aa).

The next 14 helical transmembrane spans lie at 27 to 47 (WLVT…FCFV), 53 to 73 (MMTG…FFLL), 96 to 116 (MFLI…GFAT), 151 to 171 (FFLI…IMII), 203 to 223 (VMTI…QWFY), 264 to 284 (IVNF…YPYL), 308 to 328 (VFIS…ILVT), 373 to 393 (IPMF…MVAM), 405 to 425 (VGVL…ATGL), 441 to 461 (IFAA…VSGI), 488 to 508 (AMIA…PCIF), 554 to 574 (CVEL…LVLV), 596 to 616 (FFAG…LLLW), and 629 to 649 (AAVA…SALL).

It belongs to the YSL (TC 2.A.67.2) family.

It localises to the membrane. Its function is as follows. May be involved in the transport of nicotianamine-chelated metals. The protein is Probable metal-nicotianamine transporter YSL4 (YSL4) of Oryza sativa subsp. japonica (Rice).